A 151-amino-acid chain; its full sequence is NADH dehydrogenase [ubiquinone] 1 beta subcomplex subunit 11, mitochondrial (151 aa).

The N-terminal 29 residues, 1–29 (MAARLLSLYGRCLSAAGAMRGLPAARVRW), are a transit peptide targeting the mitochondrion. The interval 40-62 (GVEKKRQREPTMQWQEDPEPEDE) is disordered. A helical transmembrane segment spans residues 87-107 (AVFFFGFSIVLVFGTTFVAYV).

The protein belongs to the complex I NDUFB11 subunit family. Complex I is composed of 45 different subunits. Interacts with BCAP31.

It is found in the mitochondrion inner membrane. Functionally, accessory subunit of the mitochondrial membrane respiratory chain NADH dehydrogenase (Complex I), that is believed not to be involved in catalysis. Complex I functions in the transfer of electrons from NADH to the respiratory chain. The immediate electron acceptor for the enzyme is believed to be ubiquinone. The protein is NADH dehydrogenase [ubiquinone] 1 beta subcomplex subunit 11, mitochondrial (Ndufb11) of Mus musculus (Mouse).